A 475-amino-acid polypeptide reads, in one-letter code: Ras-GEF domain-containing family member 1B-B (475 aa).

Over residues 1–19 (MPQTTPYSSKFNPSAYSSS) the composition is skewed to polar residues. The disordered stretch occupies residues 1–25 (MPQTTPYSSKFNPSAYSSSHSHRQP). The 131-residue stretch at 36-166 (RDNKLVSGSL…LIQRLLRKLT (131 aa)) folds into the N-terminal Ras-GEF domain. The region spanning 209-456 (DPFIFAQQLT…QLASYESEGP (248 aa)) is the Ras-GEF domain. The interval 452-475 (ESEGPENNLERDTRRSLRSSLSRM) is disordered.

Guanine nucleotide exchange factor (GEF) for Ras family proteins. The protein is Ras-GEF domain-containing family member 1B-B of Danio rerio (Zebrafish).